The following is a 337-amino-acid chain: Biotin synthase (337 aa).

The Radical SAM core domain maps to 62-289; that stretch reads NAVQLSTLIS…KAMVRLSAGR (228 aa). 3 residues coordinate [4Fe-4S] cluster: Cys-77, Cys-81, and Cys-84. [2Fe-2S] cluster contacts are provided by Cys-121, Cys-152, Cys-212, and Arg-284.

This sequence belongs to the radical SAM superfamily. Biotin synthase family. In terms of assembly, homodimer. [4Fe-4S] cluster serves as cofactor. [2Fe-2S] cluster is required as a cofactor.

The catalysed reaction is (4R,5S)-dethiobiotin + (sulfur carrier)-SH + 2 reduced [2Fe-2S]-[ferredoxin] + 2 S-adenosyl-L-methionine = (sulfur carrier)-H + biotin + 2 5'-deoxyadenosine + 2 L-methionine + 2 oxidized [2Fe-2S]-[ferredoxin]. The protein operates within cofactor biosynthesis; biotin biosynthesis; biotin from 7,8-diaminononanoate: step 2/2. Its function is as follows. Catalyzes the conversion of dethiobiotin (DTB) to biotin by the insertion of a sulfur atom into dethiobiotin via a radical-based mechanism. The polypeptide is Biotin synthase (Nitrosomonas europaea (strain ATCC 19718 / CIP 103999 / KCTC 2705 / NBRC 14298)).